Consider the following 218-residue polypeptide: Cytochrome b6 (218 aa).

A helical transmembrane segment spans residues 35–55; sequence IFYCLGGITLVCFLIQFATGF. Residue C38 coordinates heme c. H89 and H103 together coordinate heme b. A run of 3 helical transmembrane segments spans residues 93 to 113, 119 to 139, and 189 to 209; these read ASMMVLMLILHVFRVYLTGGF, LTWVTGVVMAVITVAFGVTGY, and LHTFVLPWSLAVFMLMHFLMI. H190 and H205 together coordinate heme b.

Belongs to the cytochrome b family. PetB subfamily. The 4 large subunits of the cytochrome b6-f complex are cytochrome b6, subunit IV (17 kDa polypeptide, PetD), cytochrome f and the Rieske protein, while the 4 small subunits are PetG, PetL, PetM and PetN. The complex functions as a dimer. Heme b is required as a cofactor. Requires heme c as cofactor.

The protein localises to the cellular thylakoid membrane. Its function is as follows. Component of the cytochrome b6-f complex, which mediates electron transfer between photosystem II (PSII) and photosystem I (PSI), cyclic electron flow around PSI, and state transitions. In Prochlorococcus marinus subsp. pastoris (strain CCMP1986 / NIES-2087 / MED4), this protein is Cytochrome b6.